The primary structure comprises 122 residues: RxLR effector protein Avh52 (122 aa).

A signal peptide spans 1–21; sequence MRLTSILVLVIAATFHTTGTA. Residues 50-68 carry the RxLR-dEER motif; the sequence is RLLRRVEKDKVDYEQDEQR. Positions 69-86 are TAP1-binding; the sequence is SFGALKDAVKKLNPVTAV. Positions 87-98 are nuclear localization signal (NLS); sequence KKFFKQRAKRKK.

It belongs to the RxLR effector family. Interacts with host acetyl transferase TAP1.

It localises to the secreted. The protein localises to the host nucleus. In terms of biological role, effector that suppresses plant defense responses during the early stages of pathogen infection. Suppresses cell death induced by effectors and PAMPs in plant hosts. Interacts with host acetyltransferase TAP1 and causes TAP1 relocation into the nucleus where it acetylates histones H2A and H3 during early infection, thereby promoting susceptibility of host plant to P.sojae. The sequence is that of RxLR effector protein Avh52 from Phytophthora sojae (strain P6497) (Soybean stem and root rot agent).